The primary structure comprises 84 residues: U4-theraphotoxin-Hhn1aa (84 aa).

The first 22 residues, 1–22, serve as a signal peptide directing secretion; it reads MKVTLIAILTCAAVLVLHTTAA. Residues 23-47 constitute a propeptide that is removed on maturation; the sequence is EELEESQLMEVGMPDTELAAVDEER. Intrachain disulfides connect Cys-51-Cys-65 and Cys-55-Cys-76.

Belongs to the neurotoxin 12 (Hwtx-2) family. 02 (Hwtx-2) subfamily. In terms of tissue distribution, expressed by the venom gland.

Its subcellular location is the secreted. Its function is as follows. Postsynaptic neurotoxin. The sequence is that of U4-theraphotoxin-Hhn1aa from Cyriopagopus hainanus (Chinese bird spider).